Here is a 300-residue protein sequence, read N- to C-terminus: tRNA dimethylallyltransferase (300 aa).

9 to 16 provides a ligand contact to ATP; it reads GPTASGKT. 11-16 is a binding site for substrate; the sequence is TASGKT. The interval 34-37 is interaction with substrate tRNA; sequence DSQQ.

The protein belongs to the IPP transferase family. As to quaternary structure, monomer. Mg(2+) serves as cofactor.

It catalyses the reaction adenosine(37) in tRNA + dimethylallyl diphosphate = N(6)-dimethylallyladenosine(37) in tRNA + diphosphate. Functionally, catalyzes the transfer of a dimethylallyl group onto the adenine at position 37 in tRNAs that read codons beginning with uridine, leading to the formation of N6-(dimethylallyl)adenosine (i(6)A). The chain is tRNA dimethylallyltransferase from Anaeromyxobacter sp. (strain Fw109-5).